A 95-amino-acid polypeptide reads, in one-letter code: Large ribosomal subunit protein bL28 (95 aa).

The interval 1 to 28 (MARKRTLGGKAPQAGNKVSHSQRKTRRQ) is disordered.

The protein belongs to the bacterial ribosomal protein bL28 family.

This Magnetococcus marinus (strain ATCC BAA-1437 / JCM 17883 / MC-1) protein is Large ribosomal subunit protein bL28.